We begin with the raw amino-acid sequence, 475 residues long: 1,3-beta-glucanosyltransferase gel2 (475 aa).

The N-terminal stretch at 1-21 is a signal peptide; the sequence is MLPTYVRLFTAVCALATTASA. The cysteines at positions 69 and 98 are disulfide-linked. (1,3-beta-D-glucosyl)n-binding residues include Y87, N159, E160, and D201. The active-site Proton donor is E160. 2 cysteine pairs are disulfide-bonded: C215–C350 and C234–C265. An N-linked (GlcNAc...) asparagine glycan is attached at N236. E262 serves as the catalytic Nucleophile. Y294 provides a ligand contact to (1,3-beta-D-glucosyl)n. N-linked (GlcNAc...) asparagine glycosylation is found at N311, N339, and N357. Residues 420–451 are disordered; that stretch reads GESNTPGAHSSGSTSGSSSSGGSSSSSSDKES. A compositionally biased stretch (low complexity) spans 429 to 446; that stretch reads SSGSTSGSSSSGGSSSSS. S451 carries the GPI-like-anchor amidated serine lipid modification. Residues 452–475 constitute a propeptide, removed in mature form; sequence AAGTISVPFVGLLSAASFMAFFML.

This sequence belongs to the glycosyl hydrolase 72 family. The GPI-like anchor contains a phosphoceramide lipid group.

It localises to the cell membrane. Its function is as follows. Splits internally a 1,3-beta-glucan molecule and transfers the newly generated reducing end (the donor) to the non-reducing end of another 1,3-beta-glucan molecule (the acceptor) forming a 1,3-beta linkage, resulting in the elongation of 1,3-beta-glucan chains in the cell wall. Involved in cell wall morphogenesis. The chain is 1,3-beta-glucanosyltransferase gel2 (gel2) from Aspergillus fumigatus (strain CBS 144.89 / FGSC A1163 / CEA10) (Neosartorya fumigata).